The following is a 495-amino-acid chain: WD repeat-containing protein 37 (495 aa).

The tract at residues 1–34 is disordered; the sequence is MPTESGSWAAARQTKQKRKSHSLSIKRTNSSEQD. Residues 22–31 are compositionally biased toward polar residues; sequence SLSIKRTNSS. WD repeat units lie at residues 154-194 and 197-236; these read GHRD…CLIK and GHAG…PTPQ. The interval 237 to 268 is disordered; sequence PMADTSQISGEEEVDFSDKDENDGDGDASSDC. Positions 246-264 are enriched in acidic residues; the sequence is GEEEVDFSDKDENDGDGDA. WD repeat units lie at residues 280–319, 322–361, 366–404, 407–446, and 453–494; these read SHQG…LVHS, GHDQ…IHSV, GHTD…SPIA, RTDS…LARL, and GHRR…LLQE.

It localises to the cytoplasm. It is found in the nucleus. In Xenopus laevis (African clawed frog), this protein is WD repeat-containing protein 37 (wdr37).